Consider the following 270-residue polypeptide: tRNA pseudouridine synthase A (270 aa).

Catalysis depends on aspartate 52, which acts as the Nucleophile. Tyrosine 110 is a substrate binding site. A disordered region spans residues 251-270 (TGAADEPAAPHGVTETRMQL).

Belongs to the tRNA pseudouridine synthase TruA family. In terms of assembly, homodimer.

The enzyme catalyses uridine(38/39/40) in tRNA = pseudouridine(38/39/40) in tRNA. Functionally, formation of pseudouridine at positions 38, 39 and 40 in the anticodon stem and loop of transfer RNAs. This Roseiflexus sp. (strain RS-1) protein is tRNA pseudouridine synthase A.